Consider the following 317-residue polypeptide: Melanocyte-stimulating hormone receptor (317 aa).

Topologically, residues 1–37 (MPMQGAQRRLLGSLNSTPTATPNLGLAANHTGAPCLE) are extracellular. Asn-29 is a glycosylation site (N-linked (GlcNAc...) asparagine). The helical transmembrane segment at 38-63 (VSIPDGLFLSLGLVSLVENVLVVAAI) threads the bilayer. Over 64–72 (AKNRNLHSP) the chain is Cytoplasmic. Residues 73–93 (MYCFICCLALSDLLVSGSNML) traverse the membrane as a helical segment. Over 94 to 118 (ETAVILLLEAGALATRASVVQQLQN) the chain is Extracellular. A helical transmembrane segment spans residues 119-140 (TIDVLTCSSMLCSLCFLGAIAV). Topologically, residues 141–163 (DRYVSIFYALRYHSIVTLPRARR) are cytoplasmic. The chain crosses the membrane as a helical span at residues 164-183 (AIAAIWVASVLSSTLFIAYC). Topologically, residues 184–191 (DHAAVLLC) are extracellular. The helical transmembrane segment at 192–211 (LVVFFLAMLVLMAVLYVHML) threads the bilayer. The Cytoplasmic segment spans residues 212–240 (ARACQHAQGITRLHKRQLPAHQGFGLRGA). Residues 241-266 (ATLTILLGIFFLCWGPFFLHLMLVVL) form a helical membrane-spanning segment. The Extracellular portion of the chain corresponds to 267 to 279 (CPQHLTCSCIFKN). A helical transmembrane segment spans residues 280-300 (FKVFLTLIICNTIIDPLIYAF). Over 301–317 (RSQELCRTLKEVLLCSW) the chain is Cytoplasmic. Cys-315 carries S-palmitoyl cysteine lipidation.

Belongs to the G-protein coupled receptor 1 family. In terms of assembly, interacts with MGRN1, but does not undergo MGRN1-mediated ubiquitination; this interaction competes with GNAS-binding and thus inhibits agonist-induced cAMP production. Interacts with OPN3; the interaction results in a decrease in MC1R-mediated cAMP signaling and ultimately a decrease in melanin production in melanocytes.

It localises to the cell membrane. In terms of biological role, receptor for MSH (alpha, beta and gamma) and ACTH. The activity of this receptor is mediated by G proteins which activate adenylate cyclase. Mediates melanogenesis, the production of eumelanin (black/brown) and phaeomelanin (red/yellow), via regulation of cAMP signaling in melanocytes. This Alouatta palliata (Mantled howler monkey) protein is Melanocyte-stimulating hormone receptor (MC1R).